The chain runs to 361 residues: Histidinol-phosphate aminotransferase (361 aa).

Lys-216 carries the post-translational modification N6-(pyridoxal phosphate)lysine.

It belongs to the class-II pyridoxal-phosphate-dependent aminotransferase family. Histidinol-phosphate aminotransferase subfamily. As to quaternary structure, homodimer. Pyridoxal 5'-phosphate is required as a cofactor.

The catalysed reaction is L-histidinol phosphate + 2-oxoglutarate = 3-(imidazol-4-yl)-2-oxopropyl phosphate + L-glutamate. It participates in amino-acid biosynthesis; L-histidine biosynthesis; L-histidine from 5-phospho-alpha-D-ribose 1-diphosphate: step 7/9. The protein is Histidinol-phosphate aminotransferase of Francisella philomiragia subsp. philomiragia (strain ATCC 25017 / CCUG 19701 / FSC 153 / O#319-036).